Consider the following 304-residue polypeptide: Tetrahydromethanopterin S-methyltransferase subunit E (304 aa).

6 consecutive transmembrane segments (helical) span residues 3 to 23 (PLIG…AGAS), 86 to 106 (PLFA…TFAV), 131 to 151 (HTPV…VVSY), 152 to 172 (LMTV…IWGI), 233 to 253 (PVTG…TTVF), and 263 to 283 (WISV…NWKI).

Belongs to the MtrE family. In terms of assembly, the complex is composed of 8 subunits; MtrA, MtrB, MtrC, MtrD, MtrE, MtrF, MtrG and MtrH.

The protein resides in the cell membrane. It carries out the reaction 5-methyl-5,6,7,8-tetrahydromethanopterin + coenzyme M + 2 Na(+)(in) = 5,6,7,8-tetrahydromethanopterin + methyl-coenzyme M + 2 Na(+)(out). It functions in the pathway one-carbon metabolism; methanogenesis from CO(2); methyl-coenzyme M from 5,10-methylene-5,6,7,8-tetrahydromethanopterin: step 2/2. Part of a complex that catalyzes the formation of methyl-coenzyme M and tetrahydromethanopterin from coenzyme M and methyl-tetrahydromethanopterin. This is an energy-conserving, sodium-ion translocating step. The polypeptide is Tetrahydromethanopterin S-methyltransferase subunit E (Methanosarcina acetivorans (strain ATCC 35395 / DSM 2834 / JCM 12185 / C2A)).